The following is a 584-amino-acid chain: MIFAGKAPSNTSTLMKFYSLLLYSLLFSFPFLCHPLPLPSYLHHTINLTHSLLAASNPSLVNNCWLCISLSSSAYTAVPAVQTDWATSPISLHLRTSFNSPHLYPPEELIYFLDRSSKTSPDISHQQAAALLRTYLKNLSPYINSTPPIFGPLTTQTTIPVAAPLCISWQRPTGIPLGNLSPSRCSFTLHLRSPTTNINETIGAFQLHITDKPSINTDKLKNISSNYCLGRHLPCISLHPWLSSPCSSDSPPRPSSCLLIPSPENNSERLLVDTRRFLIHHENRTFPSTQLPHQSPLQPLTAAALAGSLGVWVQDTPFSTPSHLFTLHLQFCLAQGLFFLCGSSTYMCLPANWTGTCTLVFLTPKIQFANGTEELPVPLMTPTQQKRVIPLIPLMVGLGLSASTVALGTGIAGISTSVMTFRSLSNDFSASITDISQTLSVLQAQVDSLAAVVLQNRRGLDLLTAEKGGLCIFLNEECCFYLNQSGLVYDNIKKLKDRAQKLANQASNYAEPPWALSNWMSWVLPIVSPLIPIFLLLLFGPCIFRLVSQFIQNRIQAITNHSIRQMFLLTSPQYHPLPQDLPSA.

An N-terminal signal peptide occupies residues 1–35 (MIFAGKAPSNTSTLMKFYSLLLYSLLFSFPFLCHP). Residues 36–523 (LPLPSYLHHT…WALSNWMSWV (488 aa)) are Extracellular-facing. An N-linked (GlcNAc...) asparagine glycan is attached at Asn-47. The CXXC motif lies at 64-67 (CWLC). N-linked (GlcNAc...) asparagine glycans are attached at residues Asn-199, Asn-222, Asn-265, Asn-283, Asn-352, and Asn-370. Residues 388 to 408 (VIPLIPLMVGLGLSASTVALG) are fusion peptide. Positions 454-470 (LQNRRGLDLLTAEKGGL) match the CKS-17 motif. The cysteines at positions 471 and 478 are disulfide-linked. Positions 471–479 (CIFLNEECC) match the CX6CC motif. The N-linked (GlcNAc...) asparagine glycan is linked to Asn-483. The chain crosses the membrane as a helical span at residues 524 to 544 (LPIVSPLIPIFLLLLFGPCIF). At 545–584 (RLVSQFIQNRIQAITNHSIRQMFLLTSPQYHPLPQDLPSA) the chain is on the cytoplasmic side.

This sequence belongs to the gamma type-C retroviral envelope protein family. HERV class-I H env subfamily. The surface (SU) and transmembrane (TM) proteins form a heterodimer. SU and TM are attached by noncovalent interactions or by a labile interchain disulfide bond. In terms of processing, specific enzymatic cleavages in vivo yield the mature SU and TM proteins. Post-translationally, the CXXC motif is highly conserved across a broad range of retroviral envelope proteins. It is thought to participate in the formation of a labile disulfide bond possibly with the CX6CC motif present in the transmembrane protein. Isomerization of the intersubunit disulfide bond to an SU intrachain disulfide bond is thought to occur upon receptor recognition in order to allow membrane fusion. As to expression, low expression in skin and testis. No expression in several cell lines.

Its subcellular location is the virion. The protein localises to the cell membrane. In terms of biological role, retroviral envelope proteins mediate receptor recognition and membrane fusion during early infection. Endogenous envelope proteins may have kept, lost or modified their original function during evolution. This endogenous envelope protein has lost its original fusogenic properties but has immunosuppressive properties in vivo. Its function is as follows. SU mediates receptor recognition. TM anchors the envelope heterodimer to the viral membrane through one transmembrane domain. The other hydrophobic domain, called fusion peptide, mediates fusion of the viral membrane with the target cell membrane. The sequence is that of HERV-H_2q24.3 provirus ancestral Env polyprotein from Homo sapiens (Human).